Here is a 159-residue protein sequence, read N- to C-terminus: Ribosome maturation factor RimP (159 aa).

The protein belongs to the RimP family.

The protein resides in the cytoplasm. Functionally, required for maturation of 30S ribosomal subunits. The polypeptide is Ribosome maturation factor RimP (Geotalea daltonii (strain DSM 22248 / JCM 15807 / FRC-32) (Geobacter daltonii)).